Reading from the N-terminus, the 282-residue chain is tRNA pseudouridine synthase A (282 aa).

The active-site Nucleophile is the aspartate 53. Tyrosine 119 is a binding site for substrate.

It belongs to the tRNA pseudouridine synthase TruA family. In terms of assembly, homodimer.

It carries out the reaction uridine(38/39/40) in tRNA = pseudouridine(38/39/40) in tRNA. Functionally, formation of pseudouridine at positions 38, 39 and 40 in the anticodon stem and loop of transfer RNAs. The protein is tRNA pseudouridine synthase A of Corynebacterium efficiens (strain DSM 44549 / YS-314 / AJ 12310 / JCM 11189 / NBRC 100395).